The chain runs to 603 residues: Glutathione-regulated potassium-efflux system protein KefB (603 aa).

The next 13 membrane-spanning stretches (helical) occupy residues 5–25 (ALLT…PIAA), 29–49 (IGAV…GLGF), 53–73 (VEAI…IIGL), 87–107 (IFGV…GALY), 115–135 (SALI…LQLM), 152–172 (VLLF…ILAG), 180–202 (WERI…YLVR), 207–227 (FIAA…LVLG), 230–250 (LFME…GILL), 268–288 (GLLL…GILY), 291–311 (IVKI…VLYF), 326–346 (FAGV…AAAS), and 356–376 (PLLL…MQVI). The RCK N-terminal domain maps to 400-521 (EPQVIVVGFG…VRHFSRETFS (122 aa)).

It belongs to the monovalent cation:proton antiporter 2 (CPA2) transporter (TC 2.A.37) family. KefB subfamily. Interacts with the regulatory subunit KefG.

It localises to the cell inner membrane. Functionally, pore-forming subunit of a potassium efflux system that confers protection against electrophiles. Catalyzes K(+)/H(+) antiport. The protein is Glutathione-regulated potassium-efflux system protein KefB of Pectobacterium atrosepticum (strain SCRI 1043 / ATCC BAA-672) (Erwinia carotovora subsp. atroseptica).